The sequence spans 822 residues: Putative ESX-1 scaffolding and assembly protein SaeB (822 aa).

Its function is as follows. May be involved in assembly of the ESX-1 / type VII specialized secretion system (T7SS), which exports several proteins including EsxA and EsxB. Involved in DNA conjugation in recipient (MDK8) but not donor (mc(2)155) strain. The polypeptide is Putative ESX-1 scaffolding and assembly protein SaeB (Mycolicibacterium smegmatis (strain ATCC 700084 / mc(2)155) (Mycobacterium smegmatis)).